A 664-amino-acid polypeptide reads, in one-letter code: MFVNQRTRRPYMSVFVLVLGAAVICPAYGIIDRLVVQTSSGPIRGRSTMVQGREVHVFNGVPFAKPPVDSLRFKKPVPAEPWHGVLDATRLPPSCIQERYEYFPGFAGEEMWNPNTNVSEDCLYLNIWVPTKTRLRHGRGLNFGSNDYFQDDDDFQRQHQSKGGLAMLVWIYGGGFMSGTSTLDIYNAEILAAVGNVIVASMQYRVGAFGFLYLAPYINGYEEDAPGNMGMWDQALAIRWLKENAKAFGGDPDLITLFGESAGGSSVSLHLLSPVTRGLSKRGILQSGTLNAPWSHMTAEKALQIAEGLIDDCNCNLTMLKESPSTVMQCMRNVDAKTISVQQWNSYSGILGFPSAPTIDGVFMTADPMTMLREANLEGIDILVGSNRDEGTYFLLYDFIDYFEKDAATSLPRDKFLEIMNTIFNKASEPEREAIIFQYTGWESGNDGYQNQHQVGRAVGDHFFICPTNEFALGLTERGASVHYYYFTHRTSTSLWGEWMGVLHGDEVEYIFGQPMNASLQYRQRERDLSRRMVLSVSEFARTGNPALEGEHWPLYTRENPIFFIFNAEGEDDLRGEKYGRGPMATSCAFWNDFLPRLRAWSVPSKSPCNLLEQMSIASVSSTMPIVVMVVLVLIPLCAWWWAIKKNKTPPHPQVILETRAFMH.

Positions 1 to 29 are cleaved as a signal peptide; it reads MFVNQRTRRPYMSVFVLVLGAAVICPAYG. A disulfide bridge connects residues cysteine 95 and cysteine 122. Asparagine 117 is a glycosylation site (N-linked (GlcNAc...) asparagine). The active-site Acyl-ester intermediate is the serine 261. Cysteine 315 and cysteine 330 are disulfide-bonded. The N-linked (GlcNAc...) asparagine glycan is linked to asparagine 316. Active-site charge relay system residues include glutamate 390 and histidine 504. Cysteines 466 and 588 form a disulfide. Asparagine 517 carries N-linked (GlcNAc...) asparagine glycosylation. Asparagine 647 carries GPI-anchor amidated asparagine lipidation. Positions 648 to 664 are cleaved as a propeptide — removed in mature form; that stretch reads KTPPHPQVILETRAFMH.

Belongs to the type-B carboxylesterase/lipase family. In terms of assembly, homodimer; disulfide-linked.

Its subcellular location is the synapse. The protein localises to the cell membrane. It catalyses the reaction acetylcholine + H2O = choline + acetate + H(+). Functionally, rapidly hydrolyzes choline released into the synapse. It can hydrolyze butyrylthiocholine. This Anopheles stephensi (Indo-Pakistan malaria mosquito) protein is Acetylcholinesterase.